Consider the following 602-residue polypeptide: Elongation factor 4 (602 aa).

Positions 7–189 (RNIRNFSIIA…AIVQRIPAPQ (183 aa)) constitute a tr-type G domain. GTP is bound by residues 19–24 (DHGKST) and 136–139 (NKID).

This sequence belongs to the TRAFAC class translation factor GTPase superfamily. Classic translation factor GTPase family. LepA subfamily.

The protein localises to the cell inner membrane. The enzyme catalyses GTP + H2O = GDP + phosphate + H(+). Functionally, required for accurate and efficient protein synthesis under certain stress conditions. May act as a fidelity factor of the translation reaction, by catalyzing a one-codon backward translocation of tRNAs on improperly translocated ribosomes. Back-translocation proceeds from a post-translocation (POST) complex to a pre-translocation (PRE) complex, thus giving elongation factor G a second chance to translocate the tRNAs correctly. Binds to ribosomes in a GTP-dependent manner. In Xylella fastidiosa (strain M23), this protein is Elongation factor 4.